Here is a 208-residue protein sequence, read N- to C-terminus: Small ribosomal subunit protein eS8 (208 aa).

The tract at residues 1 to 33 (MGISRDHWHKRRATGGKRKPIRKKRKFELGRPA) is disordered. A compositionally biased stretch (basic residues) spans 7 to 26 (HWHKRRATGGKRKPIRKKRK).

This sequence belongs to the eukaryotic ribosomal protein eS8 family.

The sequence is that of Small ribosomal subunit protein eS8 (RpS8) from Apis mellifera (Honeybee).